Here is a 469-residue protein sequence, read N- to C-terminus: uncharacterized protein (469 aa).

Positions 11 to 65 (LFISVAFSQESVEDLKRLLEEYKKKIQEIERRLEELEKAKKEEEKKKEAVALKPT) form a coiled coil.

This is an uncharacterized protein from Aquifex aeolicus (strain VF5).